We begin with the raw amino-acid sequence, 222 residues long: N-(5'-phosphoribosyl)anthranilate isomerase (222 aa).

The protein belongs to the TrpF family.

The enzyme catalyses N-(5-phospho-beta-D-ribosyl)anthranilate = 1-(2-carboxyphenylamino)-1-deoxy-D-ribulose 5-phosphate. It participates in amino-acid biosynthesis; L-tryptophan biosynthesis; L-tryptophan from chorismate: step 3/5. In Rhizobium etli (strain ATCC 51251 / DSM 11541 / JCM 21823 / NBRC 15573 / CFN 42), this protein is N-(5'-phosphoribosyl)anthranilate isomerase.